Reading from the N-terminus, the 287-residue chain is Ventral anterior homeobox 1b (287 aa).

Residues 1 to 33 (MFEKTRDMDVRCNIEENGRISKPKDNKEIRESQ) are compositionally biased toward basic and acidic residues. The segment at 1 to 55 (MFEKTRDMDVRCNIEENGRISKPKDNKEIRESQSKMPSTYPAPGSSEGCAKNKSS) is disordered. A DNA-binding region (homeobox) is located at residues 89 to 148 (PKRTRTSFTAEQLYRLEMEFQRCQYVVGRERTELARQLNLSETQVKVWFQNRRTKQKKDQ).

Belongs to the EMX homeobox family.

The protein localises to the nucleus. In terms of biological role, involved in ventral eye development. The chain is Ventral anterior homeobox 1b (vax1-b) from Xenopus laevis (African clawed frog).